The primary structure comprises 426 residues: Dihydroorotase (426 aa).

Zn(2+) is bound by residues His58 and His60. Residues 60 to 62 (HLR) and Asn92 contribute to the substrate site. Residues Asp150, His177, and His230 each coordinate Zn(2+). Asn276 is a substrate binding site. Asp303 is a Zn(2+) binding site. Asp303 is an active-site residue. Residues His307 and 321–322 (FG) contribute to the substrate site.

This sequence belongs to the metallo-dependent hydrolases superfamily. DHOase family. Class I DHOase subfamily. Zn(2+) serves as cofactor.

It carries out the reaction (S)-dihydroorotate + H2O = N-carbamoyl-L-aspartate + H(+). Its pathway is pyrimidine metabolism; UMP biosynthesis via de novo pathway; (S)-dihydroorotate from bicarbonate: step 3/3. Functionally, catalyzes the reversible cyclization of carbamoyl aspartate to dihydroorotate. The protein is Dihydroorotase of Listeria monocytogenes serovar 1/2a (strain ATCC BAA-679 / EGD-e).